A 376-amino-acid chain; its full sequence is MKDVPAFLQQSQSSGPGQAAVWHRLEELYTKKLWHQLTLEVLDFVQDPCFAQGDGLIKLYENFISEFEHRVNPLSLVEIILHVVRQMTDPNVALTFLEKTREKVKSSDEAVILCKTAIGALKLNIGDLQATKETIEDVEEMLNNLPGVTSVHSRFYDLSSKYYQTIGNHASYYKDALRFLGCVDIKDLPVSEQQERAFTLGLAGLLGEGVFNFGELLMHPVLESLRDTDRQWLIDTLYAFNSGAVDRFQTLKCAWGQQPDLAANEAQLLRKIQLLCLMEMTFTRPANHRQLTFEEIAKSAKITVNKVELLVMKALSVGLVRGSIDEVDKRVHMTWVQPRVLDLQQIKGMKDRLELWCTDVKSMEMLVEHQAQDILT.

Residues 171 to 338 (SYYKDALRFL…KRVHMTWVQP (168 aa)) form the PCI domain. At Lys-298 the chain carries N6-acetyllysine.

It belongs to the proteasome subunit S11 family. Component of the 19S proteasome regulatory particle complex. The 26S proteasome consists of a 20S core particle (CP) and two 19S regulatory subunits (RP). The regulatory particle is made of a lid composed of 9 subunits including PSMD13, a base containing 6 ATPases and few additional components.

Its function is as follows. Component of the 26S proteasome, a multiprotein complex involved in the ATP-dependent degradation of ubiquitinated proteins. This complex plays a key role in the maintenance of protein homeostasis by removing misfolded or damaged proteins, which could impair cellular functions, and by removing proteins whose functions are no longer required. Therefore, the proteasome participates in numerous cellular processes, including cell cycle progression, apoptosis, or DNA damage repair. This chain is 26S proteasome non-ATPase regulatory subunit 13 (Psmd13), found in Mus musculus (Mouse).